Reading from the N-terminus, the 223-residue chain is ATP phosphoribosyltransferase (223 aa).

The protein belongs to the ATP phosphoribosyltransferase family. Short subfamily. In terms of assembly, heteromultimer composed of HisG and HisZ subunits.

The protein localises to the cytoplasm. It catalyses the reaction 1-(5-phospho-beta-D-ribosyl)-ATP + diphosphate = 5-phospho-alpha-D-ribose 1-diphosphate + ATP. It functions in the pathway amino-acid biosynthesis; L-histidine biosynthesis; L-histidine from 5-phospho-alpha-D-ribose 1-diphosphate: step 1/9. In terms of biological role, catalyzes the condensation of ATP and 5-phosphoribose 1-diphosphate to form N'-(5'-phosphoribosyl)-ATP (PR-ATP). Has a crucial role in the pathway because the rate of histidine biosynthesis seems to be controlled primarily by regulation of HisG enzymatic activity. This is ATP phosphoribosyltransferase from Halothermothrix orenii (strain H 168 / OCM 544 / DSM 9562).